The chain runs to 167 residues: Ubiquitin-fold modifier-conjugating enzyme 1 (167 aa).

Residue C116 is the Glycyl thioester intermediate of the active site.

The protein belongs to the ubiquitin-conjugating enzyme family. UFC1 subfamily. Interacts with UBA5 (via C-terminus). Interacts with UFL1. Interacts with UFM1.

Its function is as follows. E2-like enzyme which specifically catalyzes the second step in ufmylation. Accepts the ubiquitin-like modifier UFM1 from the E1 enzyme UBA5 and forms an intermediate with UFM1 via a thioester linkage. Ufmylation is involved in various processes, such as ribosome recycling, response to DNA damage, interferon response or reticulophagy (also called ER-phagy). The polypeptide is Ubiquitin-fold modifier-conjugating enzyme 1 (Osmerus mordax (Rainbow smelt)).